We begin with the raw amino-acid sequence, 269 residues long: MNKKTRIAITGPIGRMGRMLIKEIQNNKHSHLTVAVVQKKHQLIGQDIGRIIGIGEIGVLISDELNIKKNDFDVLIDFTRPAGTLEYLKYCNKFKKNIVIGTTGFSKEEIDIIKSYSQKIAIIIASNFSIGINLLFQLIKKTTQIIGKDSDINILEYHHRNKIDAPSGTALEIGEVISKVMNWNLNQDSIYYQKGITGIRDAKKIGFSIVRAGNIVGKHTVMFSSCDEEIKITHTASNRMSFARGAIQSALWIHKKNTGLFDMTDVLSL.

11-16 contacts NAD(+); sequence GPIGRM. Position 39 (Lys-39) interacts with NADP(+). NAD(+) contacts are provided by residues 101 to 103 and 125 to 128; these read GTT and ASNF. His-158 acts as the Proton donor/acceptor in catalysis. His-159 is a binding site for (S)-2,3,4,5-tetrahydrodipicolinate. The active-site Proton donor is Lys-162. Residue 168-169 participates in (S)-2,3,4,5-tetrahydrodipicolinate binding; it reads GT.

This sequence belongs to the DapB family. In terms of assembly, homotetramer.

It is found in the cytoplasm. The catalysed reaction is (S)-2,3,4,5-tetrahydrodipicolinate + NAD(+) + H2O = (2S,4S)-4-hydroxy-2,3,4,5-tetrahydrodipicolinate + NADH + H(+). It carries out the reaction (S)-2,3,4,5-tetrahydrodipicolinate + NADP(+) + H2O = (2S,4S)-4-hydroxy-2,3,4,5-tetrahydrodipicolinate + NADPH + H(+). It participates in amino-acid biosynthesis; L-lysine biosynthesis via DAP pathway; (S)-tetrahydrodipicolinate from L-aspartate: step 4/4. In terms of biological role, catalyzes the conversion of 4-hydroxy-tetrahydrodipicolinate (HTPA) to tetrahydrodipicolinate. The protein is 4-hydroxy-tetrahydrodipicolinate reductase of Buchnera aphidicola subsp. Acyrthosiphon pisum (strain 5A).